The primary structure comprises 131 residues: MVTLFTSPSCTSCRKAKAWLQEHDIPYTERNIFSEHLTIDEIKQILKMTEDGTDEIISTRSKTYQKLNVDIDALPLQDLYSIIQDNPGLLRRPIILDEKRLQVGYNEDEIRRFLPRKVRTFQLQEAQRMVD.

Cysteine 10 and cysteine 13 form a disulfide bridge.

It belongs to the ArsC family. Spx subfamily. Interacts with the C-terminal domain of the alpha subunit of the RNAP.

It is found in the cytoplasm. Its function is as follows. Global transcriptional regulator that plays a key role in stress response and exerts either positive or negative regulation of genes. Acts by interacting with the C-terminal domain of the alpha subunit of the RNA polymerase (RNAP). This interaction can enhance binding of RNAP to the promoter region of target genes and stimulate their transcription, or block interaction of RNAP with activator. The polypeptide is Global transcriptional regulator Spx (Staphylococcus saprophyticus subsp. saprophyticus (strain ATCC 15305 / DSM 20229 / NCIMB 8711 / NCTC 7292 / S-41)).